A 538-amino-acid chain; its full sequence is Bifunctional purine biosynthesis protein PurH (538 aa).

Residues 6-158 (KHIPAPDLHR…KNHAYVATVV (153 aa)) enclose the MGS-like domain.

It belongs to the PurH family.

It carries out the reaction (6R)-10-formyltetrahydrofolate + 5-amino-1-(5-phospho-beta-D-ribosyl)imidazole-4-carboxamide = 5-formamido-1-(5-phospho-D-ribosyl)imidazole-4-carboxamide + (6S)-5,6,7,8-tetrahydrofolate. The enzyme catalyses IMP + H2O = 5-formamido-1-(5-phospho-D-ribosyl)imidazole-4-carboxamide. Its pathway is purine metabolism; IMP biosynthesis via de novo pathway; 5-formamido-1-(5-phospho-D-ribosyl)imidazole-4-carboxamide from 5-amino-1-(5-phospho-D-ribosyl)imidazole-4-carboxamide (10-formyl THF route): step 1/1. The protein operates within purine metabolism; IMP biosynthesis via de novo pathway; IMP from 5-formamido-1-(5-phospho-D-ribosyl)imidazole-4-carboxamide: step 1/1. The polypeptide is Bifunctional purine biosynthesis protein PurH (Brucella ovis (strain ATCC 25840 / 63/290 / NCTC 10512)).